The chain runs to 672 residues: DNA ligase (672 aa).

Residues 32-36, 81-82, and Glu114 each bind NAD(+); these read DSEYD and SL. Lys116 functions as the N6-AMP-lysine intermediate in the catalytic mechanism. Positions 137, 174, 291, and 315 each coordinate NAD(+). Residues Cys409, Cys412, Cys427, and Cys433 each contribute to the Zn(2+) site. The 81-residue stretch at 592 to 672 folds into the BRCT domain; sequence VNENPFKEKT…EFLEIVNSFS (81 aa).

The protein belongs to the NAD-dependent DNA ligase family. LigA subfamily. The cofactor is Mg(2+). Mn(2+) serves as cofactor.

The catalysed reaction is NAD(+) + (deoxyribonucleotide)n-3'-hydroxyl + 5'-phospho-(deoxyribonucleotide)m = (deoxyribonucleotide)n+m + AMP + beta-nicotinamide D-nucleotide.. Its function is as follows. DNA ligase that catalyzes the formation of phosphodiester linkages between 5'-phosphoryl and 3'-hydroxyl groups in double-stranded DNA using NAD as a coenzyme and as the energy source for the reaction. It is essential for DNA replication and repair of damaged DNA. The protein is DNA ligase of Actinobacillus succinogenes (strain ATCC 55618 / DSM 22257 / CCUG 43843 / 130Z).